A 62-amino-acid polypeptide reads, in one-letter code: Large ribosomal subunit protein bL28 (62 aa).

This sequence belongs to the bacterial ribosomal protein bL28 family.

This Acholeplasma laidlawii (strain PG-8A) protein is Large ribosomal subunit protein bL28.